Here is a 33-residue protein sequence, read N- to C-terminus: Fatty acid-binding protein, intestinal (33 aa).

It belongs to the calycin superfamily. Fatty-acid binding protein (FABP) family. In terms of tissue distribution, intestine.

The protein resides in the cytoplasm. Its function is as follows. FABPs are thought to play a role in the intracellular transport of long-chain fatty acids and their acyl-CoA esters. In Rhamdia sapo (South American catfish), this protein is Fatty acid-binding protein, intestinal (fabp2).